We begin with the raw amino-acid sequence, 650 residues long: Chaperone protein DnaK (650 aa).

Threonine 200 carries the post-translational modification Phosphothreonine; by autocatalysis. The segment at 614 to 635 is disordered; sequence AGAAGAAGAAEGAAHAGGAQQA.

This sequence belongs to the heat shock protein 70 family.

Its function is as follows. Acts as a chaperone. This is Chaperone protein DnaK from Burkholderia lata (strain ATCC 17760 / DSM 23089 / LMG 22485 / NCIMB 9086 / R18194 / 383).